The chain runs to 85 residues: RNA-binding protein Hfq (85 aa).

A Sm domain is found at 9–69 (DQLLNTARKD…ISTIIPAKII (61 aa)).

It belongs to the Hfq family. Homohexamer.

Its function is as follows. RNA chaperone that binds small regulatory RNA (sRNAs) and mRNAs to facilitate mRNA translational regulation in response to envelope stress, environmental stress and changes in metabolite concentrations. Also binds with high specificity to tRNAs. The protein is RNA-binding protein Hfq of Leptospira interrogans serogroup Icterohaemorrhagiae serovar copenhageni (strain Fiocruz L1-130).